Consider the following 169-residue polypeptide: Der GTPase-activating protein YihI (169 aa).

2 disordered regions span residues 1–83 (MNPL…PTKP) and 150–169 (DEEE…LKGN). The segment covering 21–30 (NREELNAEGR) has biased composition (basic and acidic residues). A compositionally biased stretch (basic residues) spans 31-40 (ARKREKKHRG). 2 stretches are compositionally biased toward basic and acidic residues: residues 51 to 66 (SGDK…DPRL) and 150 to 161 (DEEEREEEKQDD).

This sequence belongs to the YihI family. Interacts with Der.

A GTPase-activating protein (GAP) that modifies Der/EngA GTPase function. May play a role in ribosome biogenesis. In Photorhabdus laumondii subsp. laumondii (strain DSM 15139 / CIP 105565 / TT01) (Photorhabdus luminescens subsp. laumondii), this protein is Der GTPase-activating protein YihI.